Here is a 398-residue protein sequence, read N- to C-terminus: MLEFEVLKTDARTGEGANAHPGSHARRGQLTLTHGVVQTPIFMPVGTYGTVKGVMPQSLHEMGAQIILGNTFHLWMRPGLDVMKQFGGLHRFESWDKPILTDSGGFQVWSLGDMRKISEEGVKFASPVNGDKLFLTPEISMQIQTVLNSDIVMQFDECTPYDTKGHITTESEARSSMELSLRWAKRCVAEFDKLENPNALFGIVQGGMYQNLRHESLEALVELDLPGYAVGGVSVGEPKEEMQRIMAHTPHRLPADKPRYLMGVGTPEDLVEGVGAGIDMFDCVMPTRNARNGHLFTRFGDLKIRNARHKADEQPLDTTCTCYTCKGRTMPDGSTSGGFSRAYLHHLDRCGEMLGPMLASIHNLHYYLNLMQEIRDALDAGRFGEFAARFRTDRLRGV.

D102 serves as the catalytic Proton acceptor. Substrate is bound by residues 102–106 (DSGGF), D156, Q205, and G232. Residues 263 to 269 (GVGTPED) are RNA binding. The Nucleophile role is filled by D282. The segment at 287–291 (TRNAR) is RNA binding; important for wobble base 34 recognition. Residues C320, C322, C325, and H362 each coordinate Zn(2+).

This sequence belongs to the queuine tRNA-ribosyltransferase family. As to quaternary structure, homodimer. Within each dimer, one monomer is responsible for RNA recognition and catalysis, while the other monomer binds to the replacement base PreQ1. The cofactor is Zn(2+).

The catalysed reaction is 7-aminomethyl-7-carbaguanine + guanosine(34) in tRNA = 7-aminomethyl-7-carbaguanosine(34) in tRNA + guanine. It participates in tRNA modification; tRNA-queuosine biosynthesis. Catalyzes the base-exchange of a guanine (G) residue with the queuine precursor 7-aminomethyl-7-deazaguanine (PreQ1) at position 34 (anticodon wobble position) in tRNAs with GU(N) anticodons (tRNA-Asp, -Asn, -His and -Tyr). Catalysis occurs through a double-displacement mechanism. The nucleophile active site attacks the C1' of nucleotide 34 to detach the guanine base from the RNA, forming a covalent enzyme-RNA intermediate. The proton acceptor active site deprotonates the incoming PreQ1, allowing a nucleophilic attack on the C1' of the ribose to form the product. After dissociation, two additional enzymatic reactions on the tRNA convert PreQ1 to queuine (Q), resulting in the hypermodified nucleoside queuosine (7-(((4,5-cis-dihydroxy-2-cyclopenten-1-yl)amino)methyl)-7-deazaguanosine). This Polaromonas sp. (strain JS666 / ATCC BAA-500) protein is Queuine tRNA-ribosyltransferase.